A 262-amino-acid polypeptide reads, in one-letter code: MSERESWHKEIDLFLVAMGYFTRIPMPKWVEVDADKLNKASRYFGLVGLLVGLLSAIVFWLTQNWLPAGVSVLLSMVTGVLLTGGFHEDGLADTFDGFGGGWTAEDKLRIMKDSRLGSYGALALMLVLMLKWQLLVELALYDPVVAGSAMIVAHTVSRVVAASLIFTEKYVRDDESSKSKPLAQHQGINELFILIASGVLVLLVLKGIAALSLLLVMIGLRRLIVVIFRRQIGGYTGDTLGAAQQICEIVCYFVLLVVGSIL.

6 helical membrane passes run 43–63 (YFGL…WLTQ), 66–86 (LPAG…TGGF), 120–140 (GALA…ELAL), 146–166 (AGSA…SLIF), 191–211 (LFIL…IAAL), and 242–262 (AAQQ…GSIL).

It belongs to the CobS family. Mg(2+) serves as cofactor.

The protein resides in the cell inner membrane. The catalysed reaction is alpha-ribazole + adenosylcob(III)inamide-GDP = adenosylcob(III)alamin + GMP + H(+). It catalyses the reaction alpha-ribazole 5'-phosphate + adenosylcob(III)inamide-GDP = adenosylcob(III)alamin 5'-phosphate + GMP + H(+). It participates in cofactor biosynthesis; adenosylcobalamin biosynthesis; adenosylcobalamin from cob(II)yrinate a,c-diamide: step 7/7. Its function is as follows. Joins adenosylcobinamide-GDP and alpha-ribazole to generate adenosylcobalamin (Ado-cobalamin). Also synthesizes adenosylcobalamin 5'-phosphate from adenosylcobinamide-GDP and alpha-ribazole 5'-phosphate. The chain is Adenosylcobinamide-GDP ribazoletransferase from Shewanella sp. (strain ANA-3).